We begin with the raw amino-acid sequence, 151 residues long: UPF0208 membrane protein YPDSF_1972 (151 aa).

2 helical membrane passes run 46 to 66 (FGIRFMPPLAIFTLTWQIALG) and 69 to 89 (LGPAIATALFACGLPLQGLWW).

This sequence belongs to the UPF0208 family.

The protein localises to the cell inner membrane. The protein is UPF0208 membrane protein YPDSF_1972 of Yersinia pestis (strain Pestoides F).